We begin with the raw amino-acid sequence, 360 residues long: Photosystem II protein D1 (360 aa).

The next 3 helical transmembrane spans lie at 30-47 (YVGWFGVLMIPCLLAAAA), 119-134 (HFLIGISAYMGRQWEL), and 143-157 (WICVAYSAPVSAAFA). His-119 provides a ligand contact to chlorophyll a. Tyr-127 is a pheophytin a binding site. [CaMn4O5] cluster is bound by residues Asp-171 and Glu-190. A helical membrane pass occupies residues 198–219 (FHMAGVAGMFGGSLFSAMHGSL). His-199 serves as a coordination point for chlorophyll a. Residues His-216 and 265–266 (SF) contribute to the a quinone site. His-216 contributes to the Fe cation binding site. A Fe cation-binding site is contributed by His-273. The helical transmembrane segment at 275–289 (FLAVFPVVCVWLTSM) threads the bilayer. [CaMn4O5] cluster contacts are provided by His-333, Glu-334, Asp-343, and Ala-345. Residues 346–360 (AAESTTVALSAPAIG) constitute a propeptide that is removed on maturation.

This sequence belongs to the reaction center PufL/M/PsbA/D family. PSII is composed of 1 copy each of membrane proteins PsbA, PsbB, PsbC, PsbD, PsbE, PsbF, PsbH, PsbI, PsbJ, PsbK, PsbL, PsbM, PsbT, PsbX, PsbY, Psb30/Ycf12, peripheral proteins PsbO, CyanoQ (PsbQ), PsbU, PsbV and a large number of cofactors. It forms dimeric complexes. The D1/D2 heterodimer binds P680, chlorophylls that are the primary electron donor of PSII, and subsequent electron acceptors. It shares a non-heme iron and each subunit binds pheophytin, quinone, additional chlorophylls, carotenoids and lipids. D1 provides most of the ligands for the Mn4-Ca-O5 cluster of the oxygen-evolving complex (OEC). There is also a Cl(-1) ion associated with D1 and D2, which is required for oxygen evolution. The PSII complex binds additional chlorophylls, carotenoids and specific lipids. serves as cofactor. Tyr-162 forms a radical intermediate that is referred to as redox-active TyrZ, YZ or Y-Z. Post-translationally, C-terminally processed by CtpA; processing is essential to allow assembly of the oxygen-evolving complex and thus photosynthetic growth.

Its subcellular location is the cellular thylakoid membrane. The catalysed reaction is 2 a plastoquinone + 4 hnu + 2 H2O = 2 a plastoquinol + O2. Photosystem II (PSII) is a light-driven water:plastoquinone oxidoreductase that uses light energy to abstract electrons from H(2)O, generating O(2) and a proton gradient subsequently used for ATP formation. It consists of a core antenna complex that captures photons, and an electron transfer chain that converts photonic excitation into a charge separation. The D1/D2 (PsbA/PsbD) reaction center heterodimer binds P680, the primary electron donor of PSII as well as several subsequent electron acceptors. The chain is Photosystem II protein D1 from Prochlorococcus marinus (strain MIT 9312).